The primary structure comprises 244 residues: Lipoprotein-releasing system ATP-binding protein LolD (244 aa).

Positions 19–244 (IRAEALAKTY…KLRELAPSAV (226 aa)) constitute an ABC transporter domain. Position 55–62 (55–62 (GASGAGKS)) interacts with ATP.

It belongs to the ABC transporter superfamily. Lipoprotein translocase (TC 3.A.1.125) family. The complex is composed of two ATP-binding proteins (LolD) and two transmembrane proteins (LolC and LolE).

It is found in the cell inner membrane. In terms of biological role, part of the ABC transporter complex LolCDE involved in the translocation of mature outer membrane-directed lipoproteins, from the inner membrane to the periplasmic chaperone, LolA. Responsible for the formation of the LolA-lipoprotein complex in an ATP-dependent manner. The polypeptide is Lipoprotein-releasing system ATP-binding protein LolD (Xanthomonas oryzae pv. oryzae (strain MAFF 311018)).